Here is a 303-residue protein sequence, read N- to C-terminus: Mevalonate kinase (303 aa).

90 to 100 provides a ligand contact to ATP; sequence PAGSGLGSSAA. The active-site Proton acceptor is the aspartate 141.

It belongs to the GHMP kinase family. Mevalonate kinase subfamily. In terms of assembly, homodimer. Mg(2+) serves as cofactor.

The protein localises to the cytoplasm. The catalysed reaction is (R)-mevalonate + ATP = (R)-5-phosphomevalonate + ADP + H(+). It participates in isoprenoid biosynthesis; isopentenyl diphosphate biosynthesis via mevalonate pathway; isopentenyl diphosphate from (R)-mevalonate: step 1/3. Functionally, catalyzes the phosphorylation of (R)-mevalonate (MVA) to (R)-mevalonate 5-phosphate (MVAP). Functions in the mevalonate (MVA) pathway leading to isopentenyl diphosphate (IPP), a key precursor for the biosynthesis of isoprenoid compounds such as archaeal membrane lipids. The protein is Mevalonate kinase of Methanothermobacter thermautotrophicus (strain ATCC 29096 / DSM 1053 / JCM 10044 / NBRC 100330 / Delta H) (Methanobacterium thermoautotrophicum).